A 443-amino-acid polypeptide reads, in one-letter code: Tol-Pal system protein TolB (443 aa).

The signal sequence occupies residues 1–18; that stretch reads MRNIVYFILTLFSLTSYA.

It belongs to the TolB family. In terms of assembly, the Tol-Pal system is composed of five core proteins: the inner membrane proteins TolA, TolQ and TolR, the periplasmic protein TolB and the outer membrane protein Pal. They form a network linking the inner and outer membranes and the peptidoglycan layer.

The protein localises to the periplasm. Part of the Tol-Pal system, which plays a role in outer membrane invagination during cell division and is important for maintaining outer membrane integrity. This Rickettsia prowazekii (strain Madrid E) protein is Tol-Pal system protein TolB.